Here is a 168-residue protein sequence, read N- to C-terminus: MGNFIDKTFTVIADILLKVLPASKQEKEAFSYYRAGMSAQSKGRYAEALQNYYEALQVEEDPYDRSYTLYNIGLIYGNTGKYTQALEFYHQALSLNANLPQALNNIAVIYHSQALRAQSLEEDEYIELSKELFDKAAEYWIQALKLAPDNYPGARNWLKVTGRLSDNN.

3 TPR repeats span residues 29 to 62 (AFSY…EEDP), 66 to 99 (SYTL…NANL), and 117 to 150 (AQSL…APDN).

It belongs to the Ycf3 family.

Its subcellular location is the plastid. It localises to the chloroplast thylakoid membrane. Its function is as follows. Essential for the assembly of the photosystem I (PSI) complex. May act as a chaperone-like factor to guide the assembly of the PSI subunits. This Phaeodactylum tricornutum (strain CCAP 1055/1) protein is Photosystem I assembly protein Ycf3.